The chain runs to 529 residues: Mitochondrial inner membrane magnesium transporter MIT1 (529 aa).

2 coiled-coil regions span residues 336-388 (KIQL…LKNE) and 416-450 (LLET…LNLD). The chain crosses the membrane as a helical span at residues 456–476 (FILLNAKISFSTLFCSICAVI). The Mitochondrial intermembrane segment spans residues 477-492 (TSLFGMNLKNFIEHND). A helical membrane pass occupies residues 493–513 (YAFFIVSIFITSWSIVGIYFT). Over 514-529 (KNINTLLRFFDKYNVK) the chain is Mitochondrial matrix.

This sequence belongs to the CorA metal ion transporter (MIT) (TC 1.A.35) family.

It localises to the mitochondrion inner membrane. Functionally, mitochondrial inner membrane magnesium transporter required for mitochondrial magnesium homeostasis. Involved in the development of the sporozoite in the mosquito vector midgut. This chain is Mitochondrial inner membrane magnesium transporter MIT1, found in Plasmodium falciparum (isolate 3D7).